Reading from the N-terminus, the 746-residue chain is Histone-lysine N-methyltransferase EZH2 (746 aa).

The tract at residues methionine 1 to alanine 340 is interaction with DNMT1, DNMT3A and DNMT3B. The residue at position 21 (serine 21) is a Phosphoserine; by PKB/AKT1. An interaction with EED region spans residues lysine 39–valine 68. An O-linked (GlcNAc) serine glycan is attached at serine 75. Phosphoserine is present on serine 76. Residues glutamine 180–lysine 217 are disordered. Residues asparagine 182–glutamate 195 are compositionally biased toward acidic residues. Residues arginine 196 to lysine 217 show a composition bias toward basic and acidic residues. An interaction with CDYL region spans residues glutamate 329 to proline 522. Threonine 339 carries the post-translational modification Phosphothreonine. The interval alanine 340–proline 426 is disordered. Threonine 345 carries the phosphothreonine; by CDK1 and CDK2 modification. Residues threonine 345–arginine 357 are compositionally biased toward basic residues. Phosphoserine occurs at positions 363 and 366. Position 367 is a phosphothreonine (threonine 367). Residues glutamate 374–glycine 385 show a composition bias toward basic and acidic residues. At threonine 487 the chain carries Phosphothreonine. Residues cysteine 503–serine 605 form the CXC domain. The SET domain maps to lysine 612 to arginine 727. Lysine 634 participates in a covalent cross-link: Glycyl lysine isopeptide (Lys-Gly) (interchain with G-Cter in SUMO2).

It belongs to the class V-like SAM-binding methyltransferase superfamily. Histone-lysine methyltransferase family. EZ subfamily. As to quaternary structure, component of the PRC2/EED-EZH2 complex, which includes EED, EZH2, SUZ12, RBBP4 and RBBP7 and possibly AEBP2. The minimum components required for methyltransferase activity of the PRC2/EED-EZH2 complex are EED, EZH2 and SUZ12. The PRC2 complex may also interact with DNMT1, DNMT3A, DNMT3B and PHF1 via the EZH2 subunit and with SIRT1 via the SUZ12 subunit. Interacts with HDAC1 and HDAC2. Binds ATRX via the SET domain. Interacts with PRAME. Interacts with CDYL. Interacts with EED. Interacts with BMAL1. Interacts with CLOCK and CRY1. Interacts with DNMT3L; the interaction is direct. Interacts with EZHIP; the interaction blocks EZH2 methyltransferase activity. Interacts with ZNF263; recruited to the SIX3 promoter along with other proteins involved in chromatin modification and transcriptional corepression where it contributes to transcriptional repression. Interacts with ARMC12. Interacts with ZMYND8; the interaction is dependent on the presence of chromatin. Interacts with DDX18; this interaction inhibits the PRC2 complex. Phosphorylated by AKT1. Phosphorylation by AKT1 reduces methyltransferase activity. Phosphorylation at Thr-345 by CDK1 and CDK2 promotes maintenance of H3K27me3 levels at EZH2-target loci, thus leading to epigenetic gene silencing. Post-translationally, sumoylated. In terms of processing, glycosylated: O-GlcNAcylation at Ser-75 by OGT increases stability of EZH2 and facilitates the formation of H3K27me3 by the PRC2/EED-EZH2 complex. As to expression, present in actively dividing cells. Widely expressed in early embryos. In later embryogenesis, expression restricted to central and peripheral nervous system, liver and thymus. In adult, highest expression in spleen, testis and placenta. Lower levels in intestine, muscle and ovary and very low levels in brain and liver. No expression in heart, thyroid gland, lung and kidney.

It localises to the nucleus. Its subcellular location is the chromosome. It carries out the reaction L-lysyl(27)-[histone H3] + 3 S-adenosyl-L-methionine = N(6),N(6),N(6)-trimethyl-L-lysyl(27)-[histone H3] + 3 S-adenosyl-L-homocysteine + 3 H(+). Polycomb group (PcG) protein. Catalytic subunit of the PRC2/EED-EZH2 complex, which methylates (H3K9me) and 'Lys-27' (H3K27me) of histone H3, leading to transcriptional repression of the affected target gene. Able to mono-, di- and trimethylate 'Lys-27' of histone H3 to form H3K27me1, H3K27me2 and H3K27me3, respectively. Displays a preference for substrates with less methylation, loses activity when progressively more methyl groups are incorporated into H3K27, H3K27me0 &gt; H3K27me1 &gt; H3K27me2. Compared to EZH1-containing complexes, it is more abundant in embryonic stem cells and plays a major role in forming H3K27me3, which is required for embryonic stem cell identity and proper differentiation. The PRC2/EED-EZH2 complex may also serve as a recruiting platform for DNA methyltransferases, thereby linking two epigenetic repression systems. Genes repressed by the PRC2/EED-EZH2 complex include HOXA7, HOXB6 and HOXC8. EZH2 can also methylate non-histone proteins such as the transcription factor GATA4 and the nuclear receptor RORA. Regulates the circadian clock via histone methylation at the promoter of the circadian genes. Essential for the CRY1/2-mediated repression of the transcriptional activation of PER1/2 by the CLOCK-BMAL1 heterodimer; involved in the di and trimethylation of 'Lys-27' of histone H3 on PER1/2 promoters which is necessary for the CRY1/2 proteins to inhibit transcription. This is Histone-lysine N-methyltransferase EZH2 from Mus musculus (Mouse).